A 258-amino-acid chain; its full sequence is Imidazole glycerol phosphate synthase subunit HisF (258 aa).

Active-site residues include Asp-11 and Asp-130.

Belongs to the HisA/HisF family. As to quaternary structure, heterodimer of HisH and HisF.

Its subcellular location is the cytoplasm. It catalyses the reaction 5-[(5-phospho-1-deoxy-D-ribulos-1-ylimino)methylamino]-1-(5-phospho-beta-D-ribosyl)imidazole-4-carboxamide + L-glutamine = D-erythro-1-(imidazol-4-yl)glycerol 3-phosphate + 5-amino-1-(5-phospho-beta-D-ribosyl)imidazole-4-carboxamide + L-glutamate + H(+). The protein operates within amino-acid biosynthesis; L-histidine biosynthesis; L-histidine from 5-phospho-alpha-D-ribose 1-diphosphate: step 5/9. IGPS catalyzes the conversion of PRFAR and glutamine to IGP, AICAR and glutamate. The HisF subunit catalyzes the cyclization activity that produces IGP and AICAR from PRFAR using the ammonia provided by the HisH subunit. This chain is Imidazole glycerol phosphate synthase subunit HisF, found in Yersinia enterocolitica serotype O:8 / biotype 1B (strain NCTC 13174 / 8081).